The primary structure comprises 1216 residues: MARGRIRSKLRLSHIYTFGCLRPSADEGQDPHPIQGPGFSRTVYCNQPHMHKKKPLKYRSNYVSTTRYNLITFFPKCLYEQFHRAANFYFLVAAILSVFPLSPFNKWSMIAPLVFVVGLSMLKEALEDWSRFMQDVKINASKVYVHKSDGEFRRRKWKKISVGDIVKVEKDGFFPADLLLLSSSYEDGICYVETMNLDGETNLKVKRSLEVTLSLDDYDSFKDFTGIIRCEDPNPSLYTFVGNLEYERQIFPLDPSQILLRDSKLRNTPYVYGVVVFTGHDTKVMQNSTKSPSKRSRIEKTMDYIIYTLLVLLILISCISSSGFAWETKFHMPKWWYLRPEEPENLTNPSNPVYAGFVHLITALLLYGYLIPISLYVSIEVVKVLQASFINKDLHMYDSESGVPAHARTSNLNEELGQVDTILSDKTGTLTCNQMDFLKCSIAGTSYGVRSSEVEVAAAQQMAVDLDEHGEVSSRTSTPRAQARDIEVESSITPRIPIKGFGFEDIRLMDGNWLREPHTDDILLFFRILAICHTAIPELNEETGKYTYEAESPDEASFLTAASEFGFVFFKRTQSSVYVHERLSHSGQTIEREYKVLNLLDFTSKRKRMSVVVRDEEGQILLLCKGADSIIFERLAKNGKVYLGPTTKHLNEYGEAGLRTLALSYRKLDEEEYSAWNAEFHKAKTSIGSDRDELLERISDMIEKDLILVGATAVEDKLQKGVPQCIDKLAQAGLKLWVLTGDKMETAINIGYSCSLLRQGMKQICITVVNSEGASQDAKAVKDNILNQITKAVQMVKLEKDPHAAFALIIDGKTLTYALEDEMKYQFLALAVDCASVICCRVSPKQKALVTRLVKEGTGKITLAIGDGANDVGMIQEADIGVGISGVEGMQAVMASDFSIAQFRFLERLLVVHGHWCYKRIAQMICYFFYKNIAFGLTLFYFEAFTGFSGQSVYNDYYLLLFNVVLTSLPVIALGVFEQDVSSEICLQFPALYQQGKKNLFFDWYRILGWMGNGVYSSLVIFFLNIGIIYEQAFRVSGQTADMDAVGTTMFTCIIWAVNVQIALTVSHFTWIQHVLIWGSIGLWYLFVALYGMMPPSLSGNIYRILVEILAPAPIYWIATFLVTVTTVLPYFAHISFQRFLHPLDHHIIQEIKYYKRDVEDRRMWTRERTKAREKTKIGFTARVDAKIRHLRSKLNKKQSNMSQFSTQDTMSPRSV.

Topologically, residues 1-74 (MARGRIRSKL…TTRYNLITFF (74 aa)) are cytoplasmic. A helical membrane pass occupies residues 75–96 (PKCLYEQFHRAANFYFLVAAIL). Residues 97–100 (SVFP) are Extracellular-facing. The chain crosses the membrane as a helical span at residues 101–123 (LSPFNKWSMIAPLVFVVGLSMLK). At 124-305 (EALEDWSRFM…SRIEKTMDYI (182 aa)) the chain is on the cytoplasmic side. A helical transmembrane segment spans residues 306–327 (IYTLLVLLILISCISSSGFAWE). Over 328–359 (TKFHMPKWWYLRPEEPENLTNPSNPVYAGFVH) the chain is Extracellular. The helical transmembrane segment at 360-377 (LITALLLYGYLIPISLYV) threads the bilayer. The Cytoplasmic segment spans residues 378–922 (SIEVVKVLQA…HGHWCYKRIA (545 aa)). The active-site 4-aspartylphosphate intermediate is the Asp-425. A Glycyl lysine isopeptide (Lys-Gly) (interchain with G-Cter in ubiquitin) cross-link involves residue Lys-605. Positions 867 and 871 each coordinate Mg(2+). Residues 923-942 (QMICYFFYKNIAFGLTLFYF) form a helical membrane-spanning segment. The Extracellular segment spans residues 943–956 (EAFTGFSGQSVYND). The chain crosses the membrane as a helical span at residues 957-976 (YYLLLFNVVLTSLPVIALGV). Residues 977–1006 (FEQDVSSEICLQFPALYQQGKKNLFFDWYR) are Cytoplasmic-facing. A helical membrane pass occupies residues 1007 to 1029 (ILGWMGNGVYSSLVIFFLNIGII). The Extracellular segment spans residues 1030–1042 (YEQAFRVSGQTAD). A helical transmembrane segment spans residues 1043 to 1065 (MDAVGTTMFTCIIWAVNVQIALT). The Cytoplasmic portion of the chain corresponds to 1066-1071 (VSHFTW). A helical membrane pass occupies residues 1072 to 1092 (IQHVLIWGSIGLWYLFVALYG). Residues 1093 to 1109 (MMPPSLSGNIYRILVEI) lie on the Extracellular side of the membrane. The chain crosses the membrane as a helical span at residues 1110 to 1134 (LAPAPIYWIATFLVTVTTVLPYFAH). The Cytoplasmic portion of the chain corresponds to 1135–1216 (ISFQRFLHPL…TQDTMSPRSV (82 aa)). The tract at residues 1195–1216 (LNKKQSNMSQFSTQDTMSPRSV) is disordered. The segment covering 1198–1216 (KQSNMSQFSTQDTMSPRSV) has biased composition (polar residues).

Belongs to the cation transport ATPase (P-type) (TC 3.A.3) family. Type IV subfamily.

It localises to the membrane. The enzyme catalyses ATP + H2O + phospholipidSide 1 = ADP + phosphate + phospholipidSide 2.. Its function is as follows. Involved in transport of phospholipids. This Arabidopsis thaliana (Mouse-ear cress) protein is Probable phospholipid-transporting ATPase 4.